Here is an 854-residue protein sequence, read N- to C-terminus: Putative COX1/OXI3 intron 2 protein (854 aa).

One can recognise a Reverse transcriptase domain in the interval Leu329–Val613.

Its subcellular location is the mitochondrion. The sequence is that of Putative COX1/OXI3 intron 2 protein (AI2) from Saccharomyces cerevisiae (strain ATCC 204508 / S288c) (Baker's yeast).